A 332-amino-acid chain; its full sequence is Glycerol-3-phosphate dehydrogenase [NAD(P)+] (332 aa).

Residues tryptophan 13, arginine 33, and lysine 107 each contribute to the NADPH site. Positions 107, 136, and 138 each coordinate sn-glycerol 3-phosphate. Alanine 140 provides a ligand contact to NADPH. Positions 191, 244, 254, 255, and 256 each coordinate sn-glycerol 3-phosphate. Lysine 191 functions as the Proton acceptor in the catalytic mechanism. Position 255 (arginine 255) interacts with NADPH. Glutamate 280 is a binding site for NADPH.

The protein belongs to the NAD-dependent glycerol-3-phosphate dehydrogenase family.

Its subcellular location is the cytoplasm. The catalysed reaction is sn-glycerol 3-phosphate + NAD(+) = dihydroxyacetone phosphate + NADH + H(+). It catalyses the reaction sn-glycerol 3-phosphate + NADP(+) = dihydroxyacetone phosphate + NADPH + H(+). Its pathway is membrane lipid metabolism; glycerophospholipid metabolism. Catalyzes the reduction of the glycolytic intermediate dihydroxyacetone phosphate (DHAP) to sn-glycerol 3-phosphate (G3P), the key precursor for phospholipid synthesis. This is Glycerol-3-phosphate dehydrogenase [NAD(P)+] from Alkalilimnicola ehrlichii (strain ATCC BAA-1101 / DSM 17681 / MLHE-1).